Reading from the N-terminus, the 385-residue chain is MAAVESRVCETEGCSSEAKLQCPTCIKLGIQGSYFCSQECFKGSWASHKLLHKKAKDDKIKPETSPWTMDGDINTDPWPGYRYTGKLRPHYPLTPMRPVPSYIQRPDYADHPLGMSESEQALKGTSQIKILSTEDIEGMRVVCRLAREVLGVAAMMVKSGITTEEIDHAVHLACISRNCYPSPLNYYNFPKSCCTSVNEVICHGIPDRRPLQDGDIVNVDITVYRDGYHGDLNETFYVGDVDEGAKRLVETTYECLMQAIDEVKPGVRYRELGNIIQKHAQANGFSVVRSYCGHGIHKLFHTAPNVPHYAKNKAVGVMKPGHVFTIEPMICEGGWQDETWPDGWTAITRDGKRSAQFEHTLLVTETGCEILTRRLEENGRPHFIS.

Residues 6 to 59 (SRVCETEGCSSEAKLQCPTCIKLGIQGSYFCSQECFKGSWASHKLLHKKAKDDK) form a C6H2-type zinc finger. Zn(2+) contacts are provided by C9, C14, C22, C25, C36, C40, H48, and H52. A protein is bound at residue H203. Residues D220, D231, and H294 each contribute to the Zn(2+) site. Residue H301 coordinates a protein. Positions 327 and 358 each coordinate Zn(2+).

This sequence belongs to the peptidase M24A family. Methionine aminopeptidase type 1 subfamily. Associates with the 60S ribosomal subunit of the 80S translational complex. It depends on Zn(2+) as a cofactor. Requires Co(2+) as cofactor. Mn(2+) is required as a cofactor. Fe(2+) serves as cofactor.

It localises to the cytoplasm. The catalysed reaction is Release of N-terminal amino acids, preferentially methionine, from peptides and arylamides.. Its function is as follows. Cotranslationally removes the N-terminal methionine from nascent proteins. The N-terminal methionine is often cleaved when the second residue in the primary sequence is small and uncharged (Met-Ala-, Cys, Gly, Pro, Ser, Thr, or Val). In Xenopus tropicalis (Western clawed frog), this protein is Methionine aminopeptidase 1 (metap1).